Here is a 338-residue protein sequence, read N- to C-terminus: POU domain, class 4, transcription factor 3 (338 aa).

Residues 56–65 (RAEALAAVDI) carry the POU-IV box motif. One can recognise a POU-specific domain in the interval 179-256 (DVESDPRELE…VLQAWLEEAE (78 aa)). Residues 274 to 333 (RKRKRTSIAAPEKRSLEAYFAIQPRPSSEKIAAIAEKLDLKKNVVRVWFCNQRQKQKRMK) constitute a DNA-binding region (homeobox).

It belongs to the POU transcription factor family. Class-4 subfamily. Interacts with ISL1. Brain.

The protein resides in the nucleus. It localises to the cytoplasm. Its function is as follows. Acts as a transcriptional activator. Acts by binding to sequences related to the consensus octamer motif 5'-ATGCAAAT-3' in the regulatory regions of its target genes. Involved in the auditory system development, required for terminal differentiation of hair cells in the inner ear. This is POU domain, class 4, transcription factor 3 from Mus musculus (Mouse).